Here is a 547-residue protein sequence, read N- to C-terminus: uncharacterized protein (547 aa).

The Extracellular portion of the chain corresponds to 1 to 21; the sequence is MVKKHQNSKMGNTNHFGHLKS. Residues 22–42 form a helical membrane-spanning segment; that stretch reads FVGGNVVALGAGTPYLFSFYA. At 43–58 the chain is on the cytoplasmic side; that stretch reads PQLLSKCHIPVSASSK. Residues 59–79 traverse the membrane as a helical segment; it reads LSFSLTIGSSLMGILAGIVVD. The Extracellular segment spans residues 80–83; that stretch reads RSPK. The helical transmembrane segment at 84–104 threads the bilayer; sequence LSCLIGSMCVFIAYLILNLCY. At 105 to 110 the chain is on the cytoplasmic side; the sequence is KHEWSS. A helical transmembrane segment spans residues 111–131; the sequence is TFLISLSLVLIGYGSVSGFYA. The Extracellular portion of the chain corresponds to 132 to 144; it reads SVKCANTNFPQHR. The helical transmembrane segment at 145 to 165 threads the bilayer; sequence GTAGAFPVSLYGLSGMVFSYL. Over 166-175 the chain is Cytoplasmic; that stretch reads CSKLFGENIE. A helical membrane pass occupies residues 176–196; it reads HVFIFLMVACGCMILVGYFSL. The Extracellular segment spans residues 197 to 323; the sequence is DIFSNAEGDD…LKSSTFIGYY (127 aa). At Ser-237 the chain carries Phosphoserine. The interval 275-300 is disordered; the sequence is LLSPSSPHTKYDFEDENTSKNTVGEN. The chain crosses the membrane as a helical span at residues 324-344; that stretch reads IVLGILQGVGLMYIYSVGFMV. Topologically, residues 345-398 are cytoplasmic; sequence QAQVSTPPLNQLPINAEKIQSLQVTLLSLLSFCGRLSSGPISDFLVKKFKAQRL. Residues 399–419 form a helical membrane-spanning segment; sequence WNIVIASLLVFLASNKISHDF. Residues 420 to 437 are Extracellular-facing; it reads SSIEDPSLRASKSFKNIS. A helical membrane pass occupies residues 438–458; that stretch reads VCSAIFGYSFGVLFGTFPSIV. At 459–469 the chain is on the cytoplasmic side; the sequence is ADRFGTNGYST. A helical transmembrane segment spans residues 470–490; it reads LWGVLTTGGVFSVSVFTDILG. Residues 491-514 are Extracellular-facing; the sequence is RDFKANTGDDDGNCKKGVLCYSYT. Residues 515 to 535 form a helical membrane-spanning segment; that stretch reads FMVTKYCAAFNLLFVLGIIGY. Residues 536–547 are Cytoplasmic-facing; sequence TYYRRRATANSL.

It is found in the membrane. This is an uncharacterized protein from Saccharomyces cerevisiae (strain ATCC 204508 / S288c) (Baker's yeast).